A 122-amino-acid chain; its full sequence is Transcription initiation factor IIA subunit 2 (122 aa).

Phosphoserine occurs at positions 95 and 102.

It belongs to the TFIIA subunit 2 family. TFIIA is a heterodimer composed of the large TOA1 and a small TOA2 subunits. Interacts with TBP. Interacts with TAF11. Interacts with KAP122.

The protein resides in the cytoplasm. The protein localises to the nucleus. Its function is as follows. TFIIA is a component of the transcription machinery of RNA polymerase II and plays an important role in transcriptional activation. TFIIA in a complex with TBP mediates transcriptional activity. In Saccharomyces cerevisiae (strain ATCC 204508 / S288c) (Baker's yeast), this protein is Transcription initiation factor IIA subunit 2 (TOA2).